Here is a 166-residue protein sequence, read N- to C-terminus: Peptidoglycan-associated lipoprotein (166 aa).

Positions 1–21 (MEMLKFGKFAALALAMAVAVG) are cleaved as a signal peptide. The N-palmitoyl cysteine moiety is linked to residue Cys-22. Residue Cys-22 is the site of S-diacylglycerol cysteine attachment. The 113-residue stretch at 54–166 (SEEAALRAIT…AQNRRVELRK (113 aa)) folds into the OmpA-like domain. The segment at 147 to 166 (VATGNDEQSWAQNRRVELRK) is disordered.

It belongs to the Pal lipoprotein family. The Tol-Pal system is composed of five core proteins: the inner membrane proteins TolA, TolQ and TolR, the periplasmic protein TolB and the outer membrane protein Pal. They form a network linking the inner and outer membranes and the peptidoglycan layer.

It localises to the cell outer membrane. Part of the Tol-Pal system, which plays a role in outer membrane invagination during cell division and is important for maintaining outer membrane integrity. This chain is Peptidoglycan-associated lipoprotein, found in Pseudomonas putida (Arthrobacter siderocapsulatus).